Here is a 240-residue protein sequence, read N- to C-terminus: 2,3,4,5-tetrahydropyridine-2,6-dicarboxylate N-acetyltransferase (240 aa).

The protein belongs to the transferase hexapeptide repeat family. DapH subfamily.

It carries out the reaction (S)-2,3,4,5-tetrahydrodipicolinate + acetyl-CoA + H2O = L-2-acetamido-6-oxoheptanedioate + CoA. It functions in the pathway amino-acid biosynthesis; L-lysine biosynthesis via DAP pathway; LL-2,6-diaminopimelate from (S)-tetrahydrodipicolinate (acetylase route): step 1/3. In terms of biological role, catalyzes the transfer of an acetyl group from acetyl-CoA to tetrahydrodipicolinate. This chain is 2,3,4,5-tetrahydropyridine-2,6-dicarboxylate N-acetyltransferase, found in Bacillus cytotoxicus (strain DSM 22905 / CIP 110041 / 391-98 / NVH 391-98).